We begin with the raw amino-acid sequence, 545 residues long: Glucose-6-phosphate isomerase (545 aa).

The Proton donor role is filled by E345. Active-site residues include H376 and K514.

Belongs to the GPI family.

The protein localises to the cytoplasm. The enzyme catalyses alpha-D-glucose 6-phosphate = beta-D-fructose 6-phosphate. It functions in the pathway carbohydrate biosynthesis; gluconeogenesis. It participates in carbohydrate degradation; glycolysis; D-glyceraldehyde 3-phosphate and glycerone phosphate from D-glucose: step 2/4. Its function is as follows. Catalyzes the reversible isomerization of glucose-6-phosphate to fructose-6-phosphate. In Leptothrix cholodnii (strain ATCC 51168 / LMG 8142 / SP-6) (Leptothrix discophora (strain SP-6)), this protein is Glucose-6-phosphate isomerase.